Here is a 164-residue protein sequence, read N- to C-terminus: Class I hydrophobin rodA (164 aa).

Residues 1–18 form the signal peptide; it reads MQFSISALVLGLAATVYA. A glycan (N-linked (GlcNAc...) asparagine) is linked at asparagine 50. Intrachain disulfides connect cysteine 60-cysteine 138, cysteine 68-cysteine 132, cysteine 69-cysteine 109, and cysteine 139-cysteine 157.

Belongs to the fungal hydrophobin family. In terms of assembly, self-assembles to form functional amyloid fibrils called rodlets. Self-assembly into fibrillar rodlets occurs spontaneously at hydrophobic:hydrophilic interfaces and the rodlets further associate laterally to form amphipathic monolayers.

It localises to the secreted. The protein localises to the cell wall. In terms of biological role, aerial growth, conidiation, and dispersal of filamentous fungi in the environment rely upon a capability of their secreting small amphipathic proteins called hydrophobins (HPBs) with low sequence identity. Class I can self-assemble into an outermost layer of rodlet bundles on aerial cell surfaces, conferring cellular hydrophobicity that supports fungal growth, development and dispersal; whereas Class II form highly ordered films at water-air interfaces through intermolecular interactions but contribute nothing to the rodlet structure. RodA is a class I hydrophobin involved in the cell surface hydrophobicity. The surface rodlet layer of the conidial cell wall makes airborne conidia of filamentous fungi inert to both innate and adaptive immunity. In Penicillium camemberti (strain FM 013), this protein is Class I hydrophobin rodA.